An 870-amino-acid polypeptide reads, in one-letter code: DNA mismatch repair protein MutS (870 aa).

622-629 serves as a coordination point for ATP; the sequence is GPNMGGKS.

Belongs to the DNA mismatch repair MutS family.

This protein is involved in the repair of mismatches in DNA. It is possible that it carries out the mismatch recognition step. This protein has a weak ATPase activity. The polypeptide is DNA mismatch repair protein MutS (Methylibium petroleiphilum (strain ATCC BAA-1232 / LMG 22953 / PM1)).